The sequence spans 193 residues: MVVNKTTAVLYLIALSLSGFIHTFLRAEERGIYDDVFTADELHHYRINERGGRTGSLAVSGALLSSPCTLVSNEVPLSLRPENHSASRGAPLMLRLAGCGDGGALQPGKRGVAMTVSGSLVTGPGSGSALLPDRKLSGCDHLVIHDGDTFLLCRPDRRQEEMLAAWRKRATQEGEYSDARSNPAMLRLSIKYE.

Positions 1 to 27 (MVVNKTTAVLYLIALSLSGFIHTFLRA) are cleaved as a signal peptide.

The protein localises to the periplasm. In terms of biological role, this protein maintains pilus integrity and thus is an important participant in pilus assembly. It may function as molecular chaperone directly or indirectly in the correct assembly of PapA subunits. This is Protein PrsJ (prsJ) from Escherichia coli.